Reading from the N-terminus, the 550-residue chain is Calcyphosin-2 (550 aa).

Disordered regions lie at residues 1-20 and 175-198; these read MVPP…DNFS and ISDP…DSER. Polar residues predominate over residues 181 to 190; it reads DLNTKNQESS. EF-hand domains lie at 379–414, 415–452, and 453–488; these read RILT…FHLE, VSEQ…EMNE, and YRKS…KKHP. Asp466, Asn468, Thr470, and Asp477 together coordinate Ca(2+).

The chain is Calcyphosin-2 (Caps2) from Mus musculus (Mouse).